The following is a 291-amino-acid chain: Membrane protein insertase YidC (291 aa).

The first 19 residues, 1-19 (MKKKALLPLLLGVMVFLAG), serve as a signal peptide directing secretion. C20 carries N-palmitoyl cysteine lipidation. The S-diacylglycerol cysteine moiety is linked to residue C20. The next 4 helical transmembrane spans lie at 56 to 76 (YGIA…PFML), 134 to 154 (ALGC…YFVL), 170 to 190 (WFNL…LYFI), and 211 to 231 (MIVS…ALGL). The interval 266 to 291 (FKENNSNSNKKGKNTQVVSKNNKKKK) is disordered.

It belongs to the OXA1/ALB3/YidC family. Type 2 subfamily.

It localises to the cell membrane. In terms of biological role, required for the insertion and/or proper folding and/or complex formation of integral membrane proteins into the membrane. Involved in integration of membrane proteins that insert both dependently and independently of the Sec translocase complex, as well as at least some lipoproteins. This is Membrane protein insertase YidC from Staphylococcus haemolyticus (strain JCSC1435).